The chain runs to 525 residues: M-phase inducer phosphatase 1 (525 aa).

A Phosphodegron motif is present at residues 73–83; that stretch reads MGSSESTDSGF. Position 75 is a phosphoserine; by CHEK1 (Ser75). Residues Ser78, Ser81, and Ser87 each carry the phosphoserine; by NEK11 modification. Ser106 is modified (phosphoserine). Position 123 is a phosphoserine; by CHEK1 and CHEK2 (Ser123). The short motif at 140-142 is the KEN box element; the sequence is KEN. Phosphoserine; by CHEK1 is present on Ser177. Disordered regions lie at residues 179–204 and 262–308; these read PARM…PQSP and SASC…PEKP. Ser279 and Ser293 each carry phosphoserine; by CHEK1 and CHEK2. A compositionally biased stretch (low complexity) spans 294–306; sequence VAGASPEEAASPE. Ser322 is modified (phosphoserine). One can recognise a Rhodanese domain in the interval 377–483; it reads LIKEFVIIDC…FFLKCQSHCE (107 aa). Residue Cys432 is part of the active site. Thr508 bears the Phosphothreonine; by CHEK1 mark. Phosphoserine; by PLK3 occurs at positions 514 and 520.

The protein belongs to the MPI phosphatase family. In terms of assembly, interacts with CCNB1/cyclin B1. Interacts with YWHAE/14-3-3 epsilon when phosphorylated. Interacts with CUL1 specifically when CUL1 is neddylated and active. Interacts with BTRC/BTRCP1 and FBXW11/BTRCP2. Interactions with CUL1, BTRC and FBXW11 are enhanced upon DNA damage. Interacts with HSP90AB1; prevents heat shock-mediated CDC25A degradation and contributes to cell cycle progression. Post-translationally, phosphorylated by CHEK1 on Ser-75, Ser-123, Ser-177, Ser-279, Ser-293 and Thr-508 during checkpoint mediated cell cycle arrest. Also phosphorylated by CHEK2 on Ser-123, Ser-279, and Ser-293 during checkpoint mediated cell cycle arrest. Phosphorylation on Ser-177 and Thr-508 creates binding sites for YWHAE/14-3-3 epsilon which inhibits CDC25A. Phosphorylation on Ser-75, Ser-123, Ser-177, Ser-279 and Ser-293 may also promote ubiquitin-dependent proteolysis of CDC25A by the SCF complex. Phosphorylation of CDC25A at Ser-75 by CHEK1 primes it for subsequent phosphorylation at Ser-78, Ser-81 and Ser-87 by NEK11. Phosphorylation by NEK11 is required for BTRC-mediated polyubiquitination and degradation. Phosphorylation by PIM1 leads to an increase in phosphatase activity. Phosphorylated by PLK3 following DNA damage, leading to promote its ubiquitination and degradation. Ubiquitinated by the anaphase promoting complex/cyclosome (APC/C) ubiquitin ligase complex that contains FZR1/CDH1 during G1 phase leading to its degradation by the proteasome. Ubiquitinated by a SCF complex containing BTRC and FBXW11 during S phase leading to its degradation by the proteasome. Deubiquitination by USP17L2/DUB3 leads to its stabilization.

It catalyses the reaction O-phospho-L-tyrosyl-[protein] + H2O = L-tyrosyl-[protein] + phosphate. Stimulated by B-type cyclins. Stimulated by PIM1-mediated phosphorylation. In terms of biological role, tyrosine protein phosphatase which functions as a dosage-dependent inducer of mitotic progression. Directly dephosphorylates CDK1 and stimulates its kinase activity. Also dephosphorylates CDK2 in complex with cyclin-E, in vitro. In Bos taurus (Bovine), this protein is M-phase inducer phosphatase 1 (CDC25A).